The sequence spans 187 residues: uncharacterized protein (187 aa).

A coiled-coil region spans residues 127 to 172 (KQPQVTLTQLQEELDEAKTRLALKEKELLEALSEISKLRLQLSNQL).

This is an uncharacterized protein from Tomato torrado virus (isolate Solanum lycopersicum/Spain/PRIToTV0301/-) (ToTV).